The sequence spans 142 residues: uncharacterized protein (142 aa).

The N-acetyltransferase domain occupies 1–138; that stretch reads MLEKLAEAHP…SFMILVKPLA (138 aa).

This is an uncharacterized protein from Bacillus subtilis (strain 168).